We begin with the raw amino-acid sequence, 361 residues long: Prostaglandin E2 receptor EP2 subtype (361 aa).

Positions 1–10 are enriched in polar residues; sequence MGSISNNSGS. The disordered stretch occupies residues 1–21; sequence MGSISNNSGSEDCESREWLPS. Residues 1 to 23 lie on the Extracellular side of the membrane; that stretch reads MGSISNNSGSEDCESREWLPSGE. Asparagine 6 is a glycosylation site (N-linked (GlcNAc...) asparagine). A helical membrane pass occupies residues 24–47; the sequence is SPAISSAMFSAGVLGNLIALALLA. Residues 48–65 lie on the Cytoplasmic side of the membrane; that stretch reads RRWRGDAGRRAGRGNSIS. A helical membrane pass occupies residues 66–91; the sequence is LFHVLVTELVFTDLLGTCLISPVVLA. The Extracellular segment spans residues 92 to 111; it reads SYARNQTLMALEPERRACTY. Asparagine 96 carries an N-linked (GlcNAc...) asparagine glycan. Cysteine 109 and cysteine 187 form a disulfide bridge. The chain crosses the membrane as a helical span at residues 112-132; sequence FAFAMTFFSLATMLMLFAMAL. Residues 133-151 are Cytoplasmic-facing; it reads ERYLSIGRPYFYQRHVTRR. The helical transmembrane segment at 152–176 threads the bilayer; that stretch reads GGLAVLPTIYTVSLLFCSLPLLGYG. Topologically, residues 177–198 are extracellular; sequence QYVQYCPGTWCFIRHGRTAYLQ. A helical membrane pass occupies residues 199–223; the sequence is LYATLLLLLIVAVLACNFSVILNLI. Residues 224–262 are Cytoplasmic-facing; sequence RMHRRSGRSRCGPSLGSCRDGSGTRRRGERVSVAEETDH. Positions 230-253 are disordered; sequence GRSRCGPSLGSCRDGSGTRRRGER. Residues 263-286 form a helical membrane-spanning segment; that stretch reads LILLAIMTITFAICSLPFTIFAYM. The N-linked (GlcNAc...) asparagine glycan is linked to asparagine 287. The Extracellular portion of the chain corresponds to 287–299; the sequence is NETSSRREKWDLQ. A helical transmembrane segment spans residues 300 to 323; that stretch reads ALRFLSINSIIDPWVFAIFRPPVL. The Cytoplasmic portion of the chain corresponds to 324-361; it reads RLMRSVLCCRVSLRAQDATQTSCSIQSNASRLTFVDTS.

The protein belongs to the G-protein coupled receptor 1 family.

The protein resides in the cell membrane. Receptor for prostaglandin E2 (PGE2). The activity of this receptor is mediated by G(s) proteins that stimulate adenylate cyclase. The subsequent raise in intracellular cAMP is responsible for the relaxing effect of this receptor on smooth muscle. The sequence is that of Prostaglandin E2 receptor EP2 subtype (PTGER2) from Canis lupus familiaris (Dog).